The following is a 322-amino-acid chain: N-acetyl-gamma-glutamyl-phosphate reductase (322 aa).

C132 is an active-site residue.

The protein belongs to the NAGSA dehydrogenase family. Type 1 subfamily.

It localises to the cytoplasm. The catalysed reaction is N-acetyl-L-glutamate 5-semialdehyde + phosphate + NADP(+) = N-acetyl-L-glutamyl 5-phosphate + NADPH + H(+). It functions in the pathway amino-acid biosynthesis; L-arginine biosynthesis; N(2)-acetyl-L-ornithine from L-glutamate: step 3/4. Functionally, catalyzes the NADPH-dependent reduction of N-acetyl-5-glutamyl phosphate to yield N-acetyl-L-glutamate 5-semialdehyde. The sequence is that of N-acetyl-gamma-glutamyl-phosphate reductase from Parabacteroides distasonis (strain ATCC 8503 / DSM 20701 / CIP 104284 / JCM 5825 / NCTC 11152).